A 217-amino-acid polypeptide reads, in one-letter code: tRNA (guanine-N(7)-)-methyltransferase (217 aa).

Residues Glu-48, Glu-73, Asn-100, and Asp-123 each contribute to the S-adenosyl-L-methionine site. Asp-123 is an active-site residue. 2 residues coordinate substrate: Lys-127 and Asp-159.

This sequence belongs to the class I-like SAM-binding methyltransferase superfamily. TrmB family.

The enzyme catalyses guanosine(46) in tRNA + S-adenosyl-L-methionine = N(7)-methylguanosine(46) in tRNA + S-adenosyl-L-homocysteine. Its pathway is tRNA modification; N(7)-methylguanine-tRNA biosynthesis. Catalyzes the formation of N(7)-methylguanine at position 46 (m7G46) in tRNA. The chain is tRNA (guanine-N(7)-)-methyltransferase from Leptospira interrogans serogroup Icterohaemorrhagiae serovar copenhageni (strain Fiocruz L1-130).